The sequence spans 366 residues: Probable dual-specificity RNA methyltransferase RlmN (366 aa).

Residue Glu-108 is the Proton acceptor of the active site. A Radical SAM core domain is found at 114–352; that stretch reads YSDRSTLCIS…CTVRDTKGQE (239 aa). Cys-121 and Cys-357 are joined by a disulfide. Cys-128, Cys-132, and Cys-135 together coordinate [4Fe-4S] cluster. S-adenosyl-L-methionine-binding positions include 178 to 179, Ser-212, 235 to 237, and Asn-314; these read GE and SLH. Residue Cys-357 is the S-methylcysteine intermediate of the active site.

It belongs to the radical SAM superfamily. RlmN family. [4Fe-4S] cluster is required as a cofactor.

The protein localises to the cytoplasm. The enzyme catalyses adenosine(2503) in 23S rRNA + 2 reduced [2Fe-2S]-[ferredoxin] + 2 S-adenosyl-L-methionine = 2-methyladenosine(2503) in 23S rRNA + 5'-deoxyadenosine + L-methionine + 2 oxidized [2Fe-2S]-[ferredoxin] + S-adenosyl-L-homocysteine. It catalyses the reaction adenosine(37) in tRNA + 2 reduced [2Fe-2S]-[ferredoxin] + 2 S-adenosyl-L-methionine = 2-methyladenosine(37) in tRNA + 5'-deoxyadenosine + L-methionine + 2 oxidized [2Fe-2S]-[ferredoxin] + S-adenosyl-L-homocysteine. Specifically methylates position 2 of adenine 2503 in 23S rRNA and position 2 of adenine 37 in tRNAs. This is Probable dual-specificity RNA methyltransferase RlmN from Corynebacterium glutamicum (strain ATCC 13032 / DSM 20300 / JCM 1318 / BCRC 11384 / CCUG 27702 / LMG 3730 / NBRC 12168 / NCIMB 10025 / NRRL B-2784 / 534).